A 150-amino-acid polypeptide reads, in one-letter code: Transcriptional repressor NrdR (150 aa).

Residues 3-34 (CPFCGQLDSKVVDSRPDKGGAAIRRRRECESC) fold into a zinc finger. Residues 49–139 (PLVLKKDGRR…VYRSFKDVNE (91 aa)) enclose the ATP-cone domain.

It belongs to the NrdR family. Requires Zn(2+) as cofactor.

Functionally, negatively regulates transcription of bacterial ribonucleotide reductase nrd genes and operons by binding to NrdR-boxes. The chain is Transcriptional repressor NrdR from Geobacter sulfurreducens (strain ATCC 51573 / DSM 12127 / PCA).